Consider the following 618-residue polypeptide: C2H2 finger domain transcription factor sebA (618 aa).

Positions 394–488 are disordered; that stretch reads GDATQSTEEM…RGRKQSLTDD (95 aa). Basic residues predominate over residues 406–416; sequence KKRVTSRRSLK. Low complexity-rich tracts occupy residues 417 to 432 and 443 to 458; these read KASTSESSSDSLAKKT and SDTTSTVQQSTASSRQ. Residues 459–469 are compositionally biased toward polar residues; sequence NSTANTSNSES. C2H2-type zinc fingers lie at residues 493-516 and 522-544; these read FVCSLCSRRFRRQEHLKRHYRSLH and FECHECGKKFSRSDNLAQHARTH. The segment covering 582 to 597 has biased composition (low complexity); it reads NAATSKSTTSESSDGT. The segment at 582 to 618 is disordered; sequence NAATSKSTTSESSDGTISDTSSVGGRPAKKRRRDDHV. The span at 608-618 shows a compositional bias: basic residues; the sequence is PAKKRRRDDHV.

It is found in the nucleus. The protein localises to the cytoplasm. Its function is as follows. Transcription factor that is involved in the response to heat shock, oxidative stress, and poor nutrient conditions. Controls expression of oxidative stress response genes such as ccp1, cat1, cat2, sod2; as well as of heat shock genes such as hsf1, hsp30 and hsp90. Negatively controls the expression of the fumiquinazoline (fmq) cluster via binding to the STRE motifs at the fmqA-D promoters. Plays a role in virulence. The sequence is that of C2H2 finger domain transcription factor sebA from Aspergillus fumigatus (strain ATCC MYA-4609 / CBS 101355 / FGSC A1100 / Af293) (Neosartorya fumigata).